The following is a 486-amino-acid chain: Protein DETOXIFICATION 53 (486 aa).

Helical transmembrane passes span 15 to 35 (CPIV…MWFL), 45 to 65 (GGAL…KGLS), 94 to 114 (LLIV…PIFL), 130 to 150 (MLFF…RTFL), 159 to 179 (LTIS…VFVV), 187 to 207 (GVAI…LVYT), 240 to 260 (AISV…CGLL), 267 to 287 (VAAM…PFAI), 312 to 332 (VIGL…VTAL), 346 to 366 (ILGL…GNSP), 386 to 406 (VNLC…TFGF), and 413 to 433 (LWFG…YTLI). The disordered stretch occupies residues 448 to 474 (TSAAADKSHSEDETVHAEVQDDDDVSS). Positions 453 to 466 (DKSHSEDETVHAEV) are enriched in basic and acidic residues.

Belongs to the multi antimicrobial extrusion (MATE) (TC 2.A.66.1) family.

The protein resides in the membrane. In Arabidopsis thaliana (Mouse-ear cress), this protein is Protein DETOXIFICATION 53.